We begin with the raw amino-acid sequence, 622 residues long: Protein translocase subunit SecD (622 aa).

6 helical membrane passes run 6–26, 460–480, 485–505, 512–532, 559–579, and 584–604; these read FKIG…YPTV, AGLR…IFYY, MIAD…LAAF, PGIA…VLIF, AIFD…SFGV, and GFAV…IVIT.

It belongs to the SecD/SecF family. SecD subfamily. Forms a complex with SecF. Part of the essential Sec protein translocation apparatus which comprises SecA, SecYEG and auxiliary proteins SecDF. Other proteins may also be involved.

It is found in the cell inner membrane. Functionally, part of the Sec protein translocase complex. Interacts with the SecYEG preprotein conducting channel. SecDF uses the proton motive force (PMF) to complete protein translocation after the ATP-dependent function of SecA. This Rhodothermus marinus (strain ATCC 43812 / DSM 4252 / R-10) (Rhodothermus obamensis) protein is Protein translocase subunit SecD.